The sequence spans 41 residues: Phospholipase A2 homolog nigroviriditoxin acidic subunit A (41 aa).

This sequence belongs to the phospholipase A2 family. Group II subfamily. D49 sub-subfamily. As to quaternary structure, nigroviriditoxin is a heterodimer of an acidic subunit A and a basic subunit B. Expressed by the venom gland.

It is found in the secreted. Functionally, heterodimer A-B: Nigroviriditoxin possesses phospholipase A2 (PLA2) activity. It consists of a non-covalent association of a basic PLA2 subunit B with a non-enzymatic subunit A. In terms of biological role, subunit A: The acidic subunit of nigroviriditoxin probably is a heterotrimer of three disulfide-linked chains generated by post-translational maturation of a PLA2-like precursor. It appears to have no PLA2 activity of its own, instead inhibiting the catalytic activity of subunit B. It is not toxic to mice by itself but increases toxicity of subunit B. The sequence is that of Phospholipase A2 homolog nigroviriditoxin acidic subunit A from Bothriechis nigroviridis (Black-speckled palm pit viper).